Reading from the N-terminus, the 1781-residue chain is Signal-induced proliferation-associated 1-like protein 3 (1781 aa).

2 disordered regions span residues 45–166 (SMSQ…FLPL) and 239–332 (TELL…EASR). Residues 54 to 73 (PATATATATATTRPSPTTPA) show a composition bias toward low complexity. Residues 87–97 (PPKREALREHS) are compositionally biased toward basic and acidic residues. A Phosphoserine modification is found at S100. Positions 118-135 (RSIQNGQPPTSTPASSGS) are enriched in polar residues. Residues 137 to 146 (AFHRLSRRRS) show a composition bias toward basic residues. Position 146 is a phosphoserine (S146). S401 carries the post-translational modification Phosphoserine. In terms of domain architecture, Rap-GAP spans 611-828 (LLKLDEQGLC…RTRQEYLKDL (218 aa)). Positions 966–1042 (DMTLRRNGLG…VKVVIIPPFE (77 aa)) constitute a PDZ domain. Disordered stretches follow at residues 1046–1112 (PRRG…SLSR), 1124–1221 (ESQP…QKPE), 1236–1565 (AGSS…GLEP), and 1583–1636 (TLPA…RLDP). Composition is skewed to polar residues over residues 1080 to 1111 (APWQWSGPASHNSLPASKWATPTTPGHAQSLS) and 1157 to 1166 (PSGSFSTPGS). The segment covering 1196–1210 (DGTSSGDSSSGGLTS) has biased composition (low complexity). The segment covering 1245–1261 (SRQDAAGKDSPNRHSKG) has biased composition (basic and acidic residues). Low complexity predominate over residues 1266 to 1281 (SSHSSSNTLSSNASSS). Over residues 1304 to 1322 (GGSSDSGIDTTLYTSSPSC) the composition is skewed to polar residues. Position 1364 is a phosphoserine (S1364). At T1387 the chain carries Phosphothreonine. Over residues 1425–1441 (RPSQLAQPSPFQLSASV) the composition is skewed to polar residues. N6-acetyllysine is present on K1448. Residues 1509–1518 (TIEDDLKKLI) show a composition bias toward basic and acidic residues. Positions 1532–1547 (GQSPQKGLQRTLSDES) are enriched in polar residues. Residues S1544 and S1547 each carry the phosphoserine modification. Low complexity predominate over residues 1599 to 1609 (PGATPAAGSGF). Residues S1619 and S1622 each carry the phosphoserine modification. Over residues 1625–1635 (DGRDRPLRRLD) the composition is skewed to basic and acidic residues. S1677 carries the post-translational modification Phosphoserine. Residues 1685 to 1712 (SPVHSHLSLERGPPTPRTTPTMSEEPPL) form a disordered region. 2 positions are modified to phosphothreonine: T1699 and T1703. The stretch at 1720–1774 (QLEVMLKQLHTDLQKEKQDKVVLQSEVASLRQNNQRLQEESQAASEQLRKFAEIF) forms a coiled coil.

The protein resides in the apical cell membrane. Functionally, plays a critical role in epithelial cell morphogenesis, polarity, adhesion and cytoskeletal organization in the lens. The polypeptide is Signal-induced proliferation-associated 1-like protein 3 (SIPA1L3) (Homo sapiens (Human)).